Here is a 290-residue protein sequence, read N- to C-terminus: Probable porphobilinogen deaminase (290 aa).

At C230 the chain carries S-(dipyrrolylmethanemethyl)cysteine.

Belongs to the HMBS family. It depends on dipyrromethane as a cofactor.

It carries out the reaction 4 porphobilinogen + H2O = hydroxymethylbilane + 4 NH4(+). It functions in the pathway porphyrin-containing compound metabolism; protoporphyrin-IX biosynthesis; coproporphyrinogen-III from 5-aminolevulinate: step 2/4. In terms of biological role, tetrapolymerization of the monopyrrole PBG into the hydroxymethylbilane pre-uroporphyrinogen in several discrete steps. This chain is Probable porphobilinogen deaminase, found in Metallosphaera sedula (strain ATCC 51363 / DSM 5348 / JCM 9185 / NBRC 15509 / TH2).